The sequence spans 153 residues: Small heat shock protein HspB (153 aa).

Residues 30–140 (AGTEDNYPPC…KPRRISISGS (111 aa)) form the sHSP domain.

Belongs to the small heat shock protein (HSP20) family.

This chain is Small heat shock protein HspB (hspB), found in Bradyrhizobium diazoefficiens (strain JCM 10833 / BCRC 13528 / IAM 13628 / NBRC 14792 / USDA 110).